Here is a 391-residue protein sequence, read N- to C-terminus: O-methyltransferase ATR12 (391 aa).

S-adenosyl-L-methionine-binding positions include 233–234 (GG), D259, and 279–280 (DF). Residue H299 is the Proton acceptor of the active site.

It belongs to the class I-like SAM-binding methyltransferase superfamily. Cation-independent O-methyltransferase family. COMT subfamily.

It participates in mycotoxin biosynthesis. In terms of biological role, O-methyltransferase; part of the core atranone cluster (CAC) which products are predicted to catalyze most or all steps of mycotoxin atranone synthesis, starting from geranylgeranyl pyrophosphate (GGPP). The initial cyclization of GGPP to dolabellane is probably performed by the terpene cyclase ATR13. The Baeyer-Villiger oxidation near the end of the atranone synthesis, which converts atranones D and E to atranones F and G is predicted to be catalyzed by the monooxygenase ATR8. Of the CAC's other predicted gene products, the reducing PKS ATR6 might synthesize a polyketide chain. This polyketide is probably transferred onto the atranone backbone by the polyketide transferase ATR5. Other predicted CAC products include 4 oxygenases (ATR2, ATR3, ATR4, and ATR14), 3 short-chain reductases (ATR7, ATR9, and ATR10), and a methyltransferase (ATR12). These may all be involved in the various steps of atranone biosynthesis, although their specific roles must await experimental determination. The sequence is that of O-methyltransferase ATR12 from Stachybotrys chlorohalonatus (strain IBT 40285).